The chain runs to 508 residues: GMP synthase [glutamine-hydrolyzing] (508 aa).

In terms of domain architecture, Glutamine amidotransferase type-1 spans 1–189; that stretch reads MILVLDFGSQ…ALLVCDCEKT (189 aa). The Nucleophile role is filled by cysteine 78. Residues histidine 163 and glutamate 165 contribute to the active site. Residues 190–383 form the GMPS ATP-PPase domain; the sequence is WGMQHFAQRE…LGISQDFLMR (194 aa). 217–223 is an ATP binding site; it reads SGGVDST.

Homodimer.

It catalyses the reaction XMP + L-glutamine + ATP + H2O = GMP + L-glutamate + AMP + diphosphate + 2 H(+). The protein operates within purine metabolism; GMP biosynthesis; GMP from XMP (L-Gln route): step 1/1. Its function is as follows. Catalyzes the synthesis of GMP from XMP. The polypeptide is GMP synthase [glutamine-hydrolyzing] (Helicobacter pylori (strain HPAG1)).